The chain runs to 601 residues: NADH-quinone oxidoreductase subunit C/D (601 aa).

The segment at 1 to 192 (MIVPDLVADA…PPYSLTEDQE (192 aa)) is NADH dehydrogenase I subunit C. The NADH dehydrogenase I subunit D stretch occupies residues 216-601 (DFMFLNLGPN…IDFVMADVDR (386 aa)).

The protein in the N-terminal section; belongs to the complex I 30 kDa subunit family. In the C-terminal section; belongs to the complex I 49 kDa subunit family. As to quaternary structure, NDH-1 is composed of 13 different subunits. Subunits NuoB, CD, E, F, and G constitute the peripheral sector of the complex.

Its subcellular location is the cell inner membrane. It carries out the reaction a quinone + NADH + 5 H(+)(in) = a quinol + NAD(+) + 4 H(+)(out). Functionally, NDH-1 shuttles electrons from NADH, via FMN and iron-sulfur (Fe-S) centers, to quinones in the respiratory chain. The immediate electron acceptor for the enzyme in this species is believed to be ubiquinone. Couples the redox reaction to proton translocation (for every two electrons transferred, four hydrogen ions are translocated across the cytoplasmic membrane), and thus conserves the redox energy in a proton gradient. This Gluconacetobacter diazotrophicus (strain ATCC 49037 / DSM 5601 / CCUG 37298 / CIP 103539 / LMG 7603 / PAl5) protein is NADH-quinone oxidoreductase subunit C/D.